The sequence spans 355 residues: DNA polymerase IV (355 aa).

Residues 6 to 187 (IIHVDMDAFY…LPVGKIHGVG (182 aa)) enclose the UmuC domain. Mg(2+) contacts are provided by aspartate 10 and aspartate 105. Residue glutamate 106 is part of the active site.

This sequence belongs to the DNA polymerase type-Y family. In terms of assembly, monomer. Mg(2+) is required as a cofactor.

It is found in the cytoplasm. It carries out the reaction DNA(n) + a 2'-deoxyribonucleoside 5'-triphosphate = DNA(n+1) + diphosphate. Functionally, poorly processive, error-prone DNA polymerase involved in untargeted mutagenesis. Copies undamaged DNA at stalled replication forks, which arise in vivo from mismatched or misaligned primer ends. These misaligned primers can be extended by PolIV. Exhibits no 3'-5' exonuclease (proofreading) activity. May be involved in translesional synthesis, in conjunction with the beta clamp from PolIII. The sequence is that of DNA polymerase IV from Alkalilimnicola ehrlichii (strain ATCC BAA-1101 / DSM 17681 / MLHE-1).